Here is a 421-residue protein sequence, read N- to C-terminus: UDP-N-acetylglucosamine 1-carboxyvinyltransferase (421 aa).

22–23 is a phosphoenolpyruvate binding site; that stretch reads KN. Arg92 is a UDP-N-acetyl-alpha-D-glucosamine binding site. The active-site Proton donor is Cys116. Cys116 is modified (2-(S-cysteinyl)pyruvic acid O-phosphothioketal). 2 residues coordinate UDP-N-acetyl-alpha-D-glucosamine: Asp307 and Val329.

This sequence belongs to the EPSP synthase family. MurA subfamily.

The protein localises to the cytoplasm. The catalysed reaction is phosphoenolpyruvate + UDP-N-acetyl-alpha-D-glucosamine = UDP-N-acetyl-3-O-(1-carboxyvinyl)-alpha-D-glucosamine + phosphate. It participates in cell wall biogenesis; peptidoglycan biosynthesis. Functionally, cell wall formation. Adds enolpyruvyl to UDP-N-acetylglucosamine. The protein is UDP-N-acetylglucosamine 1-carboxyvinyltransferase of Kosmotoga olearia (strain ATCC BAA-1733 / DSM 21960 / TBF 19.5.1).